The sequence spans 1450 residues: Inactive serine/threonine-protein kinase TEX14 (1450 aa).

ANK repeat units lie at residues 27-54 (LHEY…AVNT), 55-84 (QGQS…DPNH), and 88-117 (DGST…DLRL). A phosphoserine mark is found at Ser175 and Ser186. The 314-residue stretch at 199–512 (IISAQNIYSF…ILKNDLKEFI (314 aa)) folds into the Protein kinase domain. Residues 205 to 213 (IYSFGFGKF) and Lys267 contribute to the ATP site. Ser431 is subject to Phosphoserine; by PLK1. Phosphoserine occurs at positions 561 and 662. The interval 700-720 (SDSLGSLNLPEPTREAKGKTS) is disordered. The short motif at 791–797 (GPPSLAY) is the GPPX3Y element. Disordered regions lie at residues 852-906 (VSEE…MASV), 947-977 (PPWN…RGPE), 992-1012 (DEPK…DKNK), and 1035-1062 (QPEQ…SSPI). Composition is skewed to polar residues over residues 875-886 (KQSTGEQLPSTQ) and 894-906 (KNTN…MASV). Residues 889–897 (RESLEKNTN) carry the D-box motif. Over residues 992–1011 (DEPKGNTKFGKMDNSDCDKN) the composition is skewed to basic and acidic residues. Polar residues predominate over residues 1038-1061 (QNEASQASCDTSVGTEKFYSTSSP). 2 positions are modified to phosphoserine: Ser1060 and Ser1221. 2 disordered regions span residues 1261–1282 (THAT…QQHL) and 1300–1418 (KQQQ…SLGT). Composition is skewed to polar residues over residues 1300-1311 (KQQQVSSLASHE) and 1332-1344 (TNSS…LSSR). Residues Ser1357 and Ser1358 each carry the phosphoserine modification. Composition is skewed to basic and acidic residues over residues 1383–1397 (STRE…VVEQ) and 1404–1413 (SIKPERRESD). 2 positions are modified to phosphoserine: Ser1412 and Ser1449.

The protein belongs to the protein kinase superfamily. As to quaternary structure, interacts with KIF23 and RBM44. Interacts with CEP55; inhibiting interaction between CEP55 and PDCD6IP/ALIX and TSG101. In terms of processing, phosphorylated on Thr residues by CDK1 during early phases of mitosis, promoting the interaction with PLK1 and recruitment to kinetochores. Phosphorylated on Ser-431 by PLK1 during late prometaphase promotes the rapid depletion from kinetochores and its subsequent degradation by the APC/C complex. Detected in testis and spermatogonia. Not detectable in the other tissues tested.

The protein localises to the cytoplasm. It localises to the midbody. It is found in the chromosome. Its subcellular location is the centromere. The protein resides in the kinetochore. Required both for the formation of intercellular bridges during meiosis and for kinetochore-microtubule attachment during mitosis. Intercellular bridges are evolutionarily conserved structures that connect differentiating germ cells and are required for spermatogenesis and male fertility. Acts by promoting the conversion of midbodies into intercellular bridges via its interaction with CEP55: interaction with CEP55 inhibits the interaction between CEP55 and PDCD6IP/ALIX and TSG101, blocking cell abscission and leading to transform midbodies into intercellular bridges. Also plays a role during mitosis: recruited to kinetochores by PLK1 during early mitosis and regulates the maturation of the outer kinetochores and microtubule attachment. Has no protein kinase activity in vitro. This Mus musculus (Mouse) protein is Inactive serine/threonine-protein kinase TEX14 (Tex14).